A 149-amino-acid polypeptide reads, in one-letter code: Transcriptional repressor NrdR (149 aa).

Residues 3–34 (CPFCFAVDTKVIDSRLVGEGSSVRRRRQCLVC) fold into a zinc finger. The 91-residue stretch at 49 to 139 (PRVVKSNDVR…VYRSFEDIRE (91 aa)) folds into the ATP-cone domain.

It belongs to the NrdR family. Zn(2+) serves as cofactor.

Negatively regulates transcription of bacterial ribonucleotide reductase nrd genes and operons by binding to NrdR-boxes. The sequence is that of Transcriptional repressor NrdR from Cronobacter sakazakii (strain ATCC BAA-894) (Enterobacter sakazakii).